We begin with the raw amino-acid sequence, 429 residues long: E3 ubiquitin-protein ligase ZNRF4 (429 aa).

Residues 1–27 (MPLCRPEHLMPRASRVPVAASLPLSHA) form the signal peptide. Residues 28–250 (VIPTQLPSRP…PPCHDLGCHP (223 aa)) are Lumenal-facing. The segment at 30-67 (PTQLPSRPGHRPPGRPRRCPKASCLPPPVGPSSTQTAK) is disordered. The span at 37–49 (PGHRPPGRPRRCP) shows a compositional bias: basic residues. N-linked (GlcNAc...) asparagine glycans are attached at residues N107, N152, and N229. The PA domain occupies 151 to 223 (GNRSLGAIVL…VSEAASQDLR (73 aa)). Residues 251–271 (VLTVSWVLGCTLALVVSAFFV) traverse the membrane as a helical segment. The Cytoplasmic segment spans residues 272 to 429 (LNHLWLWAQA…SSAPPEAPGQ (158 aa)). The RING-type; atypical zinc finger occupies 309 to 352 (CAICLDEYEEGDQLKILPCSHTYHCKCIDPWFSQAPRRSCPVCK).

Interacts with CANX.

Its subcellular location is the endoplasmic reticulum membrane. It catalyses the reaction S-ubiquitinyl-[E2 ubiquitin-conjugating enzyme]-L-cysteine + [acceptor protein]-L-lysine = [E2 ubiquitin-conjugating enzyme]-L-cysteine + N(6)-ubiquitinyl-[acceptor protein]-L-lysine.. The protein operates within protein modification; protein ubiquitination. Functionally, E3 ubiquitin-protein ligase that acts as a negative regulator of NOD2 signaling by mediating ubiquitination and degradation of RIPK2. Also catalyzes ubiquitination and proteasomal degradation of CANX within the endoplasmic reticulum. Could have a role in spermatogenesis. In Homo sapiens (Human), this protein is E3 ubiquitin-protein ligase ZNRF4.